A 153-amino-acid polypeptide reads, in one-letter code: 6,7-dimethyl-8-ribityllumazine synthase (153 aa).

5-amino-6-(D-ribitylamino)uracil contacts are provided by residues F22, 56–58, and 80–82; these read AFE and AVI. 85 to 86 serves as a coordination point for (2S)-2-hydroxy-3-oxobutyl phosphate; sequence GT. H88 functions as the Proton donor in the catalytic mechanism. F113 is a binding site for 5-amino-6-(D-ribitylamino)uracil. R127 is a binding site for (2S)-2-hydroxy-3-oxobutyl phosphate.

The protein belongs to the DMRL synthase family. In terms of assembly, forms an icosahedral capsid composed of 60 subunits, arranged as a dodecamer of pentamers.

The catalysed reaction is (2S)-2-hydroxy-3-oxobutyl phosphate + 5-amino-6-(D-ribitylamino)uracil = 6,7-dimethyl-8-(1-D-ribityl)lumazine + phosphate + 2 H2O + H(+). The protein operates within cofactor biosynthesis; riboflavin biosynthesis; riboflavin from 2-hydroxy-3-oxobutyl phosphate and 5-amino-6-(D-ribitylamino)uracil: step 1/2. In terms of biological role, catalyzes the formation of 6,7-dimethyl-8-ribityllumazine by condensation of 5-amino-6-(D-ribitylamino)uracil with 3,4-dihydroxy-2-butanone 4-phosphate. This is the penultimate step in the biosynthesis of riboflavin. The sequence is that of 6,7-dimethyl-8-ribityllumazine synthase from Hydrogenovibrio crunogenus (strain DSM 25203 / XCL-2) (Thiomicrospira crunogena).